The chain runs to 421 residues: MQSNRRSGKSAGSRMVSCFTRLALLAALAASGASLARADEYRLGVMDKLRVRVAEWQTAEGAVRDWSAVSGDYTVGPSGSLSLPFVGDLPASGKTTSEVAEEIGVKMQKLFGLRDRPSASVEMAQYRPVYLSGEVQTPGEYPYAPNLTVLKAVSLGGGLRRADNGQRFARDYINASGESAVQVAERSRLLIRRARLLAEIGKRDTIPMPEELKNVPDAEKLLDSETALMESRDKRQKRQLDALADLRSLLQSEIEALAKKAETQARQLELATEDRDKVDSLAEKGLALSQRKLSLEQRVADVQASLLDIDTASLKAKQDASKAAQDETNLRNDWDAQLAQELQNTEAELDTLTLKLGTSRDLMTEALLQSADAAQLEEQAAEITYSIIRDKDGKPTEIAADENTPVLPGDVIKVNTALAMR.

The signal sequence occupies residues 1-31 (MQSNRRSGKSAGSRMVSCFTRLALLAALAAS).

It localises to the periplasm. The protein operates within glycan metabolism; exopolysaccharide biosynthesis. Its function is as follows. Involved in succinoglycan (EPS I) synthesis. Needed for the addition of the first sugar (galactose) to the isoprenoid carrier. The polypeptide is Exopolysaccharide production protein ExoF (exoF) (Rhizobium meliloti (strain 1021) (Ensifer meliloti)).